A 60-amino-acid polypeptide reads, in one-letter code: Large ribosomal subunit protein uL30 (60 aa).

Belongs to the universal ribosomal protein uL30 family. As to quaternary structure, part of the 50S ribosomal subunit.

The polypeptide is Large ribosomal subunit protein uL30 (Acidothermus cellulolyticus (strain ATCC 43068 / DSM 8971 / 11B)).